The chain runs to 297 residues: tRNA pseudouridine synthase A (297 aa).

Aspartate 72 functions as the Nucleophile in the catalytic mechanism. Residue tyrosine 144 participates in substrate binding.

Belongs to the tRNA pseudouridine synthase TruA family. As to quaternary structure, homodimer.

The catalysed reaction is uridine(38/39/40) in tRNA = pseudouridine(38/39/40) in tRNA. Its function is as follows. Formation of pseudouridine at positions 38, 39 and 40 in the anticodon stem and loop of transfer RNAs. The polypeptide is tRNA pseudouridine synthase A (Mycobacterium bovis (strain ATCC BAA-935 / AF2122/97)).